We begin with the raw amino-acid sequence, 910 residues long: Potassium/sodium hyperpolarization-activated cyclic nucleotide-gated channel 1 (910 aa).

The interval 1–75 (MEGGGKPNSA…PAGSFEDAEG (75 aa)) is disordered. Residues 1-131 (MEGGGKPNSA…WIIHPYSDFR (131 aa)) lie on the Cytoplasmic side of the membrane. Residues 132 to 153 (FYWDLIMLIMMVGNLVIIPVGI) traverse the membrane as a helical segment. At 154 to 162 (TFFTEQTTT) the chain is on the extracellular side. The chain crosses the membrane as a helical span at residues 163-183 (PWIIFNVASDTVFLLDLIMNF). The Cytoplasmic segment spans residues 184-204 (RTGTVNEDSSEIILDPKVIKM). A helical transmembrane segment spans residues 205-225 (NYLKSWFVVDFISSIPVDYIF). Residues 226 to 249 (LIVEKGMDSEVYKTARALRIVRFT) lie on the Extracellular side of the membrane. A helical; Voltage-sensor membrane pass occupies residues 250–270 (KILSLLRLLRLSRLIRYIHQW). The Cytoplasmic segment spans residues 271–284 (EEIFHMTYDLASAV). A helical membrane pass occupies residues 285–307 (VRIFNLIGMMLLLCHWDGCLQFL). The Extracellular segment spans residues 308-333 (VPLLQDFPPDCWVSLNEMVNDSWGKQ). An N-linked (GlcNAc...) asparagine glycan is attached at Asn-327. An intramembrane region (pore-forming) is located at residues 334-355 (YSYALFKAMSHMLCIGYGAQAP). Positions 347–351 (CIGYG) match the Selectivity filter motif. The Extracellular segment spans residues 356-360 (VSMSD). Residues 361-381 (LWITMLSMIVGATCYAMFVGH) traverse the membrane as a helical segment. Over 382-910 (ATALIQSLDS…AEKPRFASNL (529 aa)) the chain is Cytoplasmic. The 3',5'-cyclic AMP site is built by Gly-528, Glu-529, Cys-531, Arg-538, Thr-539, Arg-579, and Arg-582. 3 disordered regions span residues 634 to 681 (TALN…QPSA), 771 to 791 (QQQQ…VHKS), and 865 to 910 (QMSS…ASNL). Positions 639 to 680 (TSSTTTPTSRMRTQSPPVYTATSLSHSNLHSPSPSTQTPQPS) are enriched in low complexity. The span at 780–791 (GSSTPKNEVHKS) shows a compositional bias: polar residues. The segment covering 875 to 885 (RGVPPAPPPPA) has biased composition (pro residues). The span at 900–910 (DAEKPRFASNL) shows a compositional bias: basic and acidic residues.

It belongs to the potassium channel HCN family. As to quaternary structure, homotetramer. Heterotetramer with HCN2. The potassium channel is composed of a homo- or heterotetrameric complex of pore-forming subunits. Interacts with KCNE2. Interacts with the SH3 domain of CSK. Post-translationally, N-glycosylated. As to expression, predominantly expressed in brain. Highly expressed in apical dendrites of pyramidal neurons in the cortex, in the layer corresponding to the stratum lacunosum-moleculare in the hippocampus and in axons of basket cells in the cerebellum (at protein level). Expressed in a subset of elongated cells in taste buds.

It is found in the cell membrane. The enzyme catalyses Na(+)(in) = Na(+)(out). It carries out the reaction K(+)(in) = K(+)(out). With respect to regulation, activated by cAMP. cAMP binding causes a conformation change that leads to the assembly of an active tetramer and channel opening. Compared to other family members, cAMP has less stimulatory effect on HCN1 because part of the molecules already contain bound cAMP and form homotetramers when cAMP levels are low, this inherent tetramerization in HCN1 results in a weaker response to increased cAMP. Hyperpolarization-activated ion channel that are permeable to sodium and potassium ions. Exhibits weak selectivity for potassium over sodium ions. Contributes to the native pacemaker currents in heart (If) and in neurons (Ih). Participates in cerebellar mechanisms of motor learning. May mediate responses to sour stimuli. This chain is Potassium/sodium hyperpolarization-activated cyclic nucleotide-gated channel 1 (Hcn1), found in Mus musculus (Mouse).